Here is a 775-residue protein sequence, read N- to C-terminus: Subtilisin-like protease SBT3.8 (775 aa).

A signal peptide spans 1–26 (MKSCRTLIFVAIILNGLSTFVAHAGA). The propeptide at 27 to 109 (ESKVHIVYLG…VTPDSFYQLD (83 aa)) is activation peptide. The Inhibitor I9 domain occupies 30 to 108 (VHIVYLGEKQ…HVTPDSFYQL (79 aa)). The region spanning 113 to 622 (TWDYLGLSVA…GGLVNPEKAA (510 aa)) is the Peptidase S8 domain. N-linked (GlcNAc...) asparagine glycosylation is present at asparagine 129. The active-site Charge relay system is aspartate 143. N-linked (GlcNAc...) asparagine glycosylation is found at asparagine 174 and asparagine 202. Catalysis depends on histidine 218, which acts as the Charge relay system. The region spanning 384–476 (SLVYPENPGN…VDYELGTDIL (93 aa)) is the PA domain. N-linked (GlcNAc...) asparagine glycosylation is found at asparagine 395, asparagine 410, and asparagine 538. Serine 553 serves as the catalytic Charge relay system. 3 N-linked (GlcNAc...) asparagine glycosylation sites follow: asparagine 645, asparagine 721, and asparagine 756.

The protein belongs to the peptidase S8 family.

Its subcellular location is the secreted. The polypeptide is Subtilisin-like protease SBT3.8 (Arabidopsis thaliana (Mouse-ear cress)).